A 219-amino-acid polypeptide reads, in one-letter code: uncharacterized protein (219 aa).

The segment covering 139–154 (PRKIKQKKKTKKKRPS) has biased composition (basic residues). The tract at residues 139–160 (PRKIKQKKKTKKKRPSKSAPKT) is disordered. Positions 159-217 (KTYTVKKGDTLWDLAGKFYGDSTKWRKIWKVNKKAMIKRSKRNIRQPGHWIFPGQKLKI) constitute a LysM domain.

This is an uncharacterized protein from Bacillus subtilis (strain 168).